The following is a 70-amino-acid chain: Conotoxin Im11.11 (70 aa).

Positions 1 to 25 are cleaved as a signal peptide; sequence MFRLTSVGCILLVIAFLNLVGLTNA. 4 disulfide bridges follow: Cys26–Cys40, Cys33–Cys45, Cys39–Cys49, and Cys44–Cys53. Pro56 carries the post-translational modification Proline amide. The propeptide occupies 60-70; it reads TRLQGFFKHRR.

Belongs to the conotoxin I2 superfamily. In terms of tissue distribution, expressed by the venom duct.

The protein localises to the secreted. In terms of biological role, probable neurotoxin. The chain is Conotoxin Im11.11 from Conus imperialis (Imperial cone).